Consider the following 589-residue polypeptide: ATP-dependent lipid A-core flippase (589 aa).

The next 5 helical transmembrane spans lie at 29–49 (WLLVVAACGALLEAVAGSTFL), 68–88 (ALWLPLGIVGLFLLRGIAGYI), 157–177 (VIGALVVMLWYSWTVTLAILL), 254–274 (ISSAAVQLLGAVGLAMLLLIA), and 283–303 (LSPGDFVSLMTSMIAVIPALK). An ABC transmembrane type-1 domain is found at 32–314 (VVAACGALLE…LTNVQNMLQS (283 aa)). The 237-residue stretch at 346 to 582 (IEFRGITARY…DGLYAYLYSM (237 aa)) folds into the ABC transporter domain. 380–387 (GRSGSGKS) contributes to the ATP binding site.

Belongs to the ABC transporter superfamily. Lipid exporter (TC 3.A.1.106) family. In terms of assembly, homodimer.

It is found in the cell inner membrane. It catalyses the reaction ATP + H2O + lipid A-core oligosaccharideSide 1 = ADP + phosphate + lipid A-core oligosaccharideSide 2.. In terms of biological role, involved in lipopolysaccharide (LPS) biosynthesis. Translocates lipid A-core from the inner to the outer leaflet of the inner membrane. Transmembrane domains (TMD) form a pore in the inner membrane and the ATP-binding domain (NBD) is responsible for energy generation. This chain is ATP-dependent lipid A-core flippase, found in Xylella fastidiosa (strain Temecula1 / ATCC 700964).